The primary structure comprises 110 residues: MNCIQRPETDRPAWFVYIVQCADGTLYTGITTNIARRITEHNSSAKGARYTRSRRPVMLVYRETCRDRSEASKREYAIKQLSPTRKRTLVKASEKGFSAIYFPSYSIKGQ.

Residues 12–88 (PAWFVYIVQC…KQLSPTRKRT (77 aa)) form the GIY-YIG domain.

It belongs to the UPF0213 family.

In Desulfotalea psychrophila (strain LSv54 / DSM 12343), this protein is UPF0213 protein DP2720.